The sequence spans 279 residues: Protein COP1 SUPPRESSOR 2 (279 aa).

Disordered regions lie at residues 1 to 29 and 57 to 79; these read MPPKRNFRKRSFEEEEEDNDVNKAAISEE and SSTAQSSIGKVKPVEKTETEGEK. A compositionally biased stretch (basic and acidic residues) spans 68 to 79; the sequence is KPVEKTETEGEK. Residues 86-183 are a coiled coil; that stretch reads DTFAQETAVL…EETEAAKKLL (98 aa). Basic and acidic residues predominate over residues 217 to 229; sequence LRREHPELYKDRG. Residues 217–279 are disordered; it reads LRREHPELYK…KRERNRVMRR (63 aa). A compositionally biased stretch (polar residues) spans 250 to 260; it reads ADSGKSRQAAT. Residues 270 to 279 show a composition bias toward basic residues; the sequence is KRERNRVMRR.

Belongs to the TLS1 family. As to quaternary structure, interacts with COP1.

It is found in the nucleus. It localises to the nucleus speckle. Inhibits E3 ubiquitin-protein ligase activity of COP1, a central repressor of seedling photomorphogenesis. Represses COP1-mediated turnover of HY5 in the dark. Required for primary root development under normal light growth conditions. The sequence is that of Protein COP1 SUPPRESSOR 2 from Arabidopsis thaliana (Mouse-ear cress).